Here is a 157-residue protein sequence, read N- to C-terminus: Small ribosomal subunit protein uS7 (157 aa).

It belongs to the universal ribosomal protein uS7 family. In terms of assembly, part of the 30S ribosomal subunit. Contacts proteins S9 and S11.

In terms of biological role, one of the primary rRNA binding proteins, it binds directly to 16S rRNA where it nucleates assembly of the head domain of the 30S subunit. Is located at the subunit interface close to the decoding center, probably blocks exit of the E-site tRNA. In Variovorax paradoxus (strain S110), this protein is Small ribosomal subunit protein uS7.